The chain runs to 171 residues: Peptide deformylase (171 aa).

2 residues coordinate Fe cation: Cys-91 and His-133. Residue Glu-134 is part of the active site. His-137 contributes to the Fe cation binding site.

It belongs to the polypeptide deformylase family. Fe(2+) serves as cofactor.

It carries out the reaction N-terminal N-formyl-L-methionyl-[peptide] + H2O = N-terminal L-methionyl-[peptide] + formate. In terms of biological role, removes the formyl group from the N-terminal Met of newly synthesized proteins. Requires at least a dipeptide for an efficient rate of reaction. N-terminal L-methionine is a prerequisite for activity but the enzyme has broad specificity at other positions. The protein is Peptide deformylase of Cronobacter sakazakii (strain ATCC BAA-894) (Enterobacter sakazakii).